The sequence spans 511 residues: 4,4'-diapophytoene desaturase (4,4'-diapolycopene-forming) (511 aa).

Belongs to the carotenoid/retinoid oxidoreductase family.

The enzyme catalyses 15-cis-4,4'-diapophytoene + 4 FAD + 4 H(+) = all-trans-4,4'-diapolycopene + 4 FADH2. The protein operates within carotenoid biosynthesis. Functionally, involved in the biosynthesis of C30 carotenoids. Catalyzes four successive dehydrogenation reactions that lead to the introduction of four double bonds into 4,4'-diapophytoene (dehydrosqualene) to yield 4,4'-diapolycopene. The polypeptide is 4,4'-diapophytoene desaturase (4,4'-diapolycopene-forming) (Methylomonas sp).